We begin with the raw amino-acid sequence, 523 residues long: Synaptotagmin-10 (523 aa).

The Vesicular segment spans residues 1 to 55 (MSFRKEDGVSSLCQKALHIITELCFAGQVEWDKCSGIFPADRSGQGGGGTDISVS). The interval 13 to 35 (CQKALHIITELCFAGQVEWDKCS) is cysteine motif. A helical transmembrane segment spans residues 56–76 (LLAVVVSFCGLALLVVSLFVF). The Cytoplasmic portion of the chain corresponds to 77-523 (WKLCWPCWKS…CSSPRPPSTP (447 aa)). Thr136 is modified (phosphothreonine). 2 consecutive C2 domains span residues 231–352 (TCGK…TVWK) and 363–496 (DLGE…THWH). Ca(2+) is bound by residues Asp262, Asp268, Asp320, Phe321, Asp322, Ser325, Asp328, Asp394, Asp400, Asp454, and Asp456.

It belongs to the synaptotagmin family. Homodimer; disulfide-linked via the cysteine motif. Can also form heterodimers with SYT3, SYT6, SYT7 and SYT9. The cofactor is Ca(2+).

It localises to the cytoplasmic vesicle. It is found in the secretory vesicle membrane. Its function is as follows. Ca(2+) sensor specifically required for the Ca(2+)-dependent exocytosis of secretory vesicles containing IGF1 in neurons of the olfactory bulb. Exocytosis of IGF1 is required for sensory perception of smell. Not involved in Ca(2+)-dependent synaptic vesicle exocytosis. Acts through Ca(2+) and phospholipid binding to the C2 domain: Ca(2+) induces binding of the C2-domains to phospholipid membranes and to assembled SNARE-complexes; both actions contribute to triggering exocytosis. This Rattus norvegicus (Rat) protein is Synaptotagmin-10 (Syt10).